Reading from the N-terminus, the 404-residue chain is tRNA pseudouridine synthase D (404 aa).

D79 acts as the Nucleophile in catalysis. A TRUD domain is found at 154 to 364 (GVPNRFGEQR…MEGERRPLRV (211 aa)).

This sequence belongs to the pseudouridine synthase TruD family.

It carries out the reaction uridine(13) in tRNA = pseudouridine(13) in tRNA. In terms of biological role, responsible for synthesis of pseudouridine from uracil-13 in transfer RNAs. The polypeptide is tRNA pseudouridine synthase D (Geobacter metallireducens (strain ATCC 53774 / DSM 7210 / GS-15)).